The sequence spans 69 residues: Large ribosomal subunit protein uL29 (69 aa).

It belongs to the universal ribosomal protein uL29 family.

This Rhodopseudomonas palustris (strain TIE-1) protein is Large ribosomal subunit protein uL29.